We begin with the raw amino-acid sequence, 324 residues long: Melanoma-associated antigen B16 (324 aa).

Residues 1-15 (MSQDQESPRCTHDQH) are compositionally biased toward basic and acidic residues. 2 disordered regions span residues 1–22 (MSQD…FSET) and 39–108 (LSSS…PRNV). Over residues 70-81 (SSSIAVTTTSSS) the composition is skewed to low complexity. The span at 82–95 (ESDEASSNQEEEDS) shows a compositional bias: acidic residues. Positions 113–312 (LDQKVAFLVN…HSFPSQYAEA (200 aa)) constitute an MAGE domain.

The sequence is that of Melanoma-associated antigen B16 (MAGEB16) from Homo sapiens (Human).